Here is a 215-residue protein sequence, read N- to C-terminus: NADH-quinone oxidoreductase subunit C (215 aa).

Belongs to the complex I 30 kDa subunit family. As to quaternary structure, NDH-1 is composed of 14 different subunits. Subunits NuoB, C, D, E, F, and G constitute the peripheral sector of the complex.

Its subcellular location is the cell inner membrane. The enzyme catalyses a quinone + NADH + 5 H(+)(in) = a quinol + NAD(+) + 4 H(+)(out). Functionally, NDH-1 shuttles electrons from NADH, via FMN and iron-sulfur (Fe-S) centers, to quinones in the respiratory chain. The immediate electron acceptor for the enzyme in this species is believed to be ubiquinone. Couples the redox reaction to proton translocation (for every two electrons transferred, four hydrogen ions are translocated across the cytoplasmic membrane), and thus conserves the redox energy in a proton gradient. This Methylobacterium radiotolerans (strain ATCC 27329 / DSM 1819 / JCM 2831 / NBRC 15690 / NCIMB 10815 / 0-1) protein is NADH-quinone oxidoreductase subunit C.